Reading from the N-terminus, the 195-residue chain is MARSAAIERITKETQIKLSLEIDGKGEAQICTSVPFLDHMLDLFARHGLFDLKVEAHGDIDIDFHHTVEDIGIVLGTAFKEALGDKCGIRRYGNAVVPMDEVLASVATDLSGRPYLVYNVELPKVKIGDFDVELVREFFQGFVNHCGANLHLNLMYGDNVHHIVEACFKAAARALDQATQLDARIEGVMSTKGKL.

It belongs to the imidazoleglycerol-phosphate dehydratase family.

The protein resides in the cytoplasm. It carries out the reaction D-erythro-1-(imidazol-4-yl)glycerol 3-phosphate = 3-(imidazol-4-yl)-2-oxopropyl phosphate + H2O. Its pathway is amino-acid biosynthesis; L-histidine biosynthesis; L-histidine from 5-phospho-alpha-D-ribose 1-diphosphate: step 6/9. The sequence is that of Imidazoleglycerol-phosphate dehydratase from Citrifermentans bemidjiense (strain ATCC BAA-1014 / DSM 16622 / JCM 12645 / Bem) (Geobacter bemidjiensis).